Reading from the N-terminus, the 223-residue chain is Protein-L-isoaspartate O-methyltransferase (223 aa).

Ser-70 is an active-site residue.

This sequence belongs to the methyltransferase superfamily. L-isoaspartyl/D-aspartyl protein methyltransferase family.

It is found in the cytoplasm. It carries out the reaction [protein]-L-isoaspartate + S-adenosyl-L-methionine = [protein]-L-isoaspartate alpha-methyl ester + S-adenosyl-L-homocysteine. Functionally, catalyzes the methyl esterification of L-isoaspartyl residues in peptides and proteins that result from spontaneous decomposition of normal L-aspartyl and L-asparaginyl residues. It plays a role in the repair and/or degradation of damaged proteins. The chain is Protein-L-isoaspartate O-methyltransferase from Methylobacillus flagellatus (strain ATCC 51484 / DSM 6875 / VKM B-1610 / KT).